A 452-amino-acid chain; its full sequence is MAGKIGFVSLGCPKALVDSELILTQLSAEGYKTAKDYSGADLVVVNTCGFIDSAVEESLSAIGEALAENGKVIVTGCLGARKNADGSDLIHSIHPKVLAVTGPHATDEVMQVIHLHLPKPHDLYTDLVPSARVRLTPKHYAYLKISEGCNHRCTFCIIPNLRGDLVSRPIGDVLLEVKRLFESGVKELLVVSQDTSAYGVDIQYRTGFWDGKPVKTKMFDLVNTLNQIAREHQAWVRLHYVYPYPHVDDILPLMAEFAEHGYGVLPYLDIPLQHAHPDVLKKMKRPASGEKNLERILAWREACPDLVIRSTFIAGFPGETEGEFEYLLNFLDEAQIDRAGCFAYSPVDGATANELANPVPDQIREDRRARLMAKAEEISVGRLAKKIGKRLQVIIDRVDDHGGIGRTIGDAPEIDGLVRVLPANKPSKRYRAGEIIRVTVISSQGHDLIAET.

The 116-residue stretch at 3 to 118 (GKIGFVSLGC…VMQVIHLHLP (116 aa)) folds into the MTTase N-terminal domain. [4Fe-4S] cluster contacts are provided by cysteine 12, cysteine 48, cysteine 77, cysteine 149, cysteine 153, and cysteine 156. Positions 135 to 382 (LTPKHYAYLK…AKAEEISVGR (248 aa)) constitute a Radical SAM core domain. Residues 384-452 (AKKIGKRLQV…SQGHDLIAET (69 aa)) form the TRAM domain.

Belongs to the methylthiotransferase family. RimO subfamily. The cofactor is [4Fe-4S] cluster.

The protein resides in the cytoplasm. It carries out the reaction L-aspartate(89)-[ribosomal protein uS12]-hydrogen + (sulfur carrier)-SH + AH2 + 2 S-adenosyl-L-methionine = 3-methylsulfanyl-L-aspartate(89)-[ribosomal protein uS12]-hydrogen + (sulfur carrier)-H + 5'-deoxyadenosine + L-methionine + A + S-adenosyl-L-homocysteine + 2 H(+). In terms of biological role, catalyzes the methylthiolation of an aspartic acid residue of ribosomal protein uS12. This is Ribosomal protein uS12 methylthiotransferase RimO from Polynucleobacter necessarius subsp. necessarius (strain STIR1).